A 617-amino-acid polypeptide reads, in one-letter code: Dopamine beta-hydroxylase (617 aa).

Residues 1–16 lie on the Cytoplasmic side of the membrane; it reads MPALSRWASLPGPSMR. The helical; Signal-anchor for type II membrane protein transmembrane segment at 17 to 37 threads the bilayer; that stretch reads EAAFMYSTAVAIFLVILVAAL. Over 38–617 the chain is Intragranular; sequence QGSAPRESPL…TVVSIGGGKG (580 aa). Positions 57 to 173 constitute a DOMON domain; the sequence is GSLELSWNVS…GTVHLVYGIL (117 aa). Residue N64 is glycosylated (N-linked (GlcNAc...) asparagine). Intrachain disulfides connect C154–C596, C232–C283, C269–C295, C390–C503, C394–C565, and C466–C488. N-linked (GlcNAc...) (complex) asparagine glycosylation occurs at N184. Y230 is a catalytic residue. H262 and H263 together coordinate Cu(2+). H333 is a binding site for Cu(2+). Residue N344 is glycosylated (N-linked (GlcNAc...) asparagine). H412 is a catalytic residue. H412, H414, and M487 together coordinate Cu(2+). N566 carries an N-linked (GlcNAc...) asparagine glycan. The interval 590-617 is disordered; it reads EEPTPQCPTSQGRSPAGPTVVSIGGGKG.

Belongs to the copper type II ascorbate-dependent monooxygenase family. In terms of assembly, homotetramer; composed of two disulfide-linked dimers. Requires Cu(2+) as cofactor. In terms of processing, N-glycosylated. Proteolytic cleavage after the membrane-anchor leads to the release of the soluble form.

It localises to the cytoplasmic vesicle. The protein localises to the secretory vesicle lumen. The protein resides in the secretory vesicle. Its subcellular location is the chromaffin granule lumen. It is found in the secreted. It localises to the secretory vesicle membrane. The protein localises to the chromaffin granule membrane. It catalyses the reaction dopamine + 2 L-ascorbate + O2 = (R)-noradrenaline + 2 monodehydro-L-ascorbate radical + H2O. The protein operates within catecholamine biosynthesis; (R)-noradrenaline biosynthesis; (R)-noradrenaline from dopamine: step 1/1. Catalyzes the hydroxylation of dopamine to noradrenaline (also known as norepinephrine), and is thus vital for regulation of these neurotransmitters. This is Dopamine beta-hydroxylase (DBH) from Homo sapiens (Human).